A 140-amino-acid polypeptide reads, in one-letter code: Fluoride-specific ion channel FluC 2 (140 aa).

The next 4 helical transmembrane spans lie at 7–27 (VPPL…LGAL), 45–65 (WATF…MVLV), 77–97 (PFAG…GLEI), and 106–126 (VLEA…GVVL). Positions 85 and 88 each coordinate Na(+).

Belongs to the fluoride channel Fluc/FEX (TC 1.A.43) family.

The protein resides in the cell membrane. The enzyme catalyses fluoride(in) = fluoride(out). Its activity is regulated as follows. Na(+) is not transported, but it plays an essential structural role and its presence is essential for fluoride channel function. In terms of biological role, fluoride-specific ion channel. Important for reducing fluoride concentration in the cell, thus reducing its toxicity. The chain is Fluoride-specific ion channel FluC 2 from Nocardia farcinica (strain IFM 10152).